Consider the following 306-residue polypeptide: Recombination-associated protein RdgC (306 aa).

It belongs to the RdgC family.

It is found in the cytoplasm. It localises to the nucleoid. In terms of biological role, may be involved in recombination. This Pseudomonas syringae pv. syringae (strain B728a) protein is Recombination-associated protein RdgC.